Consider the following 411-residue polypeptide: ATP-dependent Clp protease ATP-binding subunit ClpX (411 aa).

The ClpX-type ZB domain maps to 1–49 (MSDRDIRCSFCGRTQKEVKKLIAGPGVYICDECVKLAYDIIEEDEEEDV). Zn(2+) is bound by residues Cys-8, Cys-11, Cys-30, and Cys-33. Residue 115–122 (PTGVGKTL) participates in ATP binding.

The protein belongs to the ClpX chaperone family. In terms of assembly, component of the ClpX-ClpP complex. Forms a hexameric ring that, in the presence of ATP, binds to fourteen ClpP subunits assembled into a disk-like structure with a central cavity, resembling the structure of eukaryotic proteasomes.

In terms of biological role, ATP-dependent specificity component of the Clp protease. It directs the protease to specific substrates. Can perform chaperone functions in the absence of ClpP. This Dictyoglomus thermophilum (strain ATCC 35947 / DSM 3960 / H-6-12) protein is ATP-dependent Clp protease ATP-binding subunit ClpX.